Here is a 574-residue protein sequence, read N- to C-terminus: E3 ubiquitin-protein ligase TRIM23 (574 aa).

The segment at 31–76 (CGVCEDVFSLQGDKVPRLLLCGHTVCHDCLTRLPLHGRAIRCPFDR) adopts an RING-type; degenerate zinc-finger fold. The segment at 122 to 168 (ESIIRCDEDEAHLASVYCTVCATHLCSECSQVTHSTKTLAKHRRVPL) adopts a B box-type; degenerate zinc-finger fold. Residues 352-379 (RVVLAKQEITRLLETLQKQQQQFTEVAD) adopt a coiled-coil conformation. The tract at residues 390–574 (TFTKDNRVHI…LVAAGVLDVA (185 aa)) is ARF-like. GTP-binding positions include 411 to 418 (GLDGAGKT), 454 to 458 (DVGGK), and 513 to 516 (NKQD).

The protein in the C-terminal section; belongs to the small GTPase superfamily. Arf family. Homodimer. Interacts with PSCD1. Interacts with UBE2D2. Interacts with TBK1 (via N-terminal kinase domain) and p62/SQSTM1. As to quaternary structure, (Microbial infection) Interacts with human cytomegalovirus protein UL144; this interaction might cause autoubiquitination of TRAF6, leading to NF-kappa-B activation.

The protein localises to the cytoplasm. Its subcellular location is the endomembrane system. It localises to the golgi apparatus membrane. It is found in the lysosome membrane. It carries out the reaction S-ubiquitinyl-[E2 ubiquitin-conjugating enzyme]-L-cysteine + [acceptor protein]-L-lysine = [E2 ubiquitin-conjugating enzyme]-L-cysteine + N(6)-ubiquitinyl-[acceptor protein]-L-lysine.. It functions in the pathway protein modification; protein ubiquitination. Acts as an E3 ubiquitin-protein ligase. Plays an essential role in autophagy activation during viral infection. Mechanistically, activates TANK-binding kinase 1/TBK1 by facilitating its dimerization and ability to phosphorylate the selective autophagy receptor SQSTM1. In order to achieve this function, TRIM23 mediates 'Lys-27'-linked auto-ubiquitination of its ADP-ribosylation factor (ARF) domain to induce its GTPase activity and its recruitment to autophagosomes. Functionally, (Microbial infection) Mediates TRAF6 auto-ubiquitination in the presence of human cytomegalovirus protein UL144, resulting in the virally controlled activation of NF-kappa-B stimulation at early times of HCMV infection. This is E3 ubiquitin-protein ligase TRIM23 (TRIM23) from Homo sapiens (Human).